The chain runs to 708 residues: Homeobox-leucine zipper protein HDG10 (708 aa).

Positions 1-24 (MDSSHNDSSSDEEGIDSNNRRHHS) are disordered. Positions 16–75 (DSNNRRHHSNHQVQRLEAFFHECPHPDDSQRRQLGNELNLKHKQIKFWFQNRRTQARIHN) form a DNA-binding region, homeobox. Residues 119-141 (LCNLQKLRTKNVILKTEYERLSS) are a coiled coil. The disordered stretch occupies residues 162-188 (GPSTYGSTSNNRPASYGSSSNHLPQQS). Polar residues predominate over residues 165-188 (TYGSTSNNRPASYGSSSNHLPQQS). Positions 218-456 (SQLEKNRMFE…LQRMCERLSL (239 aa)) constitute an START domain.

This sequence belongs to the HD-ZIP homeobox family. Class IV subfamily. Interacts with ANT, BBM and AIL1. As to expression, expressed in exclusively in anthers with highest levels in the tapetum and pollen grains.

It localises to the nucleus. Functionally, probable transcription factor. This is Homeobox-leucine zipper protein HDG10 from Arabidopsis thaliana (Mouse-ear cress).